We begin with the raw amino-acid sequence, 55 residues long: Large ribosomal subunit protein bL33 (55 aa).

The protein belongs to the bacterial ribosomal protein bL33 family.

The sequence is that of Large ribosomal subunit protein bL33 from Mesorhizobium japonicum (strain LMG 29417 / CECT 9101 / MAFF 303099) (Mesorhizobium loti (strain MAFF 303099)).